The following is a 34-amino-acid chain: Phallacidin proprotein 1 (34 aa).

The propeptide occupies 1–10 (MSDINATRLP). The cyclopeptide (Ala-Pro) cross-link spans 11 to 17 (AWLVDCP). The 2'-cysteinyl-6'-hydroxytryptophan sulfoxide (Trp-Cys) cross-link spans 12 to 16 (WLVDC). Positions 18–34 (CVGDDVNRLLTRGESLC) are excised as a propeptide.

Belongs to the MSDIN fungal toxin family. Post-translationally, processed by the macrocyclase-peptidase enzyme POPB to yield a toxic cyclic heptapeptide. POPB first removes 10 residues from the N-terminus. Conformational trapping of the remaining peptide forces the enzyme to release this intermediate rather than proceed to macrocyclization. The enzyme rebinds the remaining peptide in a different conformation and catalyzes macrocyclization of the N-terminal 7 residues.

Functionally, major toxin that belongs to the bicyclic heptapeptides called phallotoxins. Although structurally related to amatoxins, phallotoxins have a different mode of action, which is the stabilization of F-actin. Phallotoxins are poisonous when administered parenterally, but not orally because of poor absorption. In Amanita bisporigera (Destroying angel), this protein is Phallacidin proprotein 1.